The chain runs to 554 residues: Phospholipase B-like protein E (554 aa).

The N-terminal stretch at 1–19 is a signal peptide; it reads MKLFILLIVIVFLISNSYS. 6 N-linked (GlcNAc...) asparagine glycosylation sites follow: Asn-113, Asn-140, Asn-231, Asn-302, Asn-340, and Asn-546.

This sequence belongs to the phospholipase B-like family.

The protein localises to the secreted. Functionally, probable phospholipase. The chain is Phospholipase B-like protein E (plbE) from Dictyostelium discoideum (Social amoeba).